A 252-amino-acid chain; its full sequence is 3-dehydroquinate dehydratase (252 aa).

3-dehydroquinate-binding positions include serine 21, glutamate 46–arginine 48, and arginine 82. Histidine 143 functions as the Proton donor/acceptor in the catalytic mechanism. The active-site Schiff-base intermediate with substrate is the lysine 170. The 3-dehydroquinate site is built by arginine 213, serine 232, and glutamine 236.

Belongs to the type-I 3-dehydroquinase family. Homodimer.

It carries out the reaction 3-dehydroquinate = 3-dehydroshikimate + H2O. It participates in metabolic intermediate biosynthesis; chorismate biosynthesis; chorismate from D-erythrose 4-phosphate and phosphoenolpyruvate: step 3/7. Its function is as follows. Involved in the third step of the chorismate pathway, which leads to the biosynthesis of aromatic amino acids. Catalyzes the cis-dehydration of 3-dehydroquinate (DHQ) and introduces the first double bond of the aromatic ring to yield 3-dehydroshikimate. This chain is 3-dehydroquinate dehydratase, found in Shigella sonnei (strain Ss046).